The following is a 124-amino-acid chain: Large ribosomal subunit protein bL21 (124 aa).

The tract at residues 105–124 is disordered; the sequence is TVKAEPKSKRAPAPEAAADA. A compositionally biased stretch (low complexity) spans 115–124; the sequence is APAPEAAADA.

This sequence belongs to the bacterial ribosomal protein bL21 family. In terms of assembly, part of the 50S ribosomal subunit. Contacts protein L20.

Functionally, this protein binds to 23S rRNA in the presence of protein L20. This is Large ribosomal subunit protein bL21 from Xanthobacter autotrophicus (strain ATCC BAA-1158 / Py2).